Here is a 521-residue protein sequence, read N- to C-terminus: UPF0053 protein BU323 (521 aa).

Transmembrane regions (helical) follow at residues 13–33 (LLTL…FVAI), 49–69 (IGLG…SWIV), 80–100 (FFSL…LLFK), 125–145 (FWAV…DAII), 150–170 (MVNQ…LMLL), 185–205 (VVVL…TEAL), and 207–227 (FCIP…IEIF). CBS domains lie at 311–370 (MTPR…KIDA) and 374–434 (SSKI…DADE).

It belongs to the UPF0053 family.

The protein resides in the cell membrane. The sequence is that of UPF0053 protein BU323 from Buchnera aphidicola subsp. Acyrthosiphon pisum (strain APS) (Acyrthosiphon pisum symbiotic bacterium).